Here is a 683-residue protein sequence, read N- to C-terminus: Transforming growth factor-beta-induced protein ig-h3 (683 aa).

Positions 1–23 (MALLMRLLTLALALSVGPAGTLA) are cleaved as a signal peptide. Serine 37 is modified (phosphoserine). Residues 45 to 99 (GPNVCAVQKVIGTNKKYFTNCKQWYQRKICGKSTVISYECCPGYEKVPGEKGCPA) form the EMI domain. Disulfide bonds link cysteine 49-cysteine 85, cysteine 74-cysteine 339, cysteine 84-cysteine 97, cysteine 214-cysteine 317, and cysteine 473-cysteine 478. Cysteine 65 is subject to S-cysteinyl cysteine. 4 consecutive FAS1 domains span residues 103–236 (LSNL…DKVI), 240–371 (TNNI…DELL), 375–498 (SAKT…DRML), and 502–632 (MGTV…NTVL). Residues 642–644 (RGD) carry the Cell attachment site motif.

Binds to type I, II, and IV collagens. In terms of processing, gamma-carboxylation is controversial. Gamma-carboxyglutamated; gamma-carboxyglutamate residues are formed by vitamin K dependent carboxylation; this may be required for calcium binding. According to a more recent report, does not contain vitamin K-dependent gamma-carboxyglutamate residues. The EMI domain contains 2 expected intradomain disulfide bridges (Cys-49-Cys85 and Cys-84-Cys-97) and one unusual interdomain disulfide bridge to the second FAS1 domain (Cys-74-Cys-339). This arrangement violates the predicted disulfide bridge pattern of an EMI domain. As to expression, expressed in heart, kidney, liver, skeletal muscle, testis, thyroid and uterus.

It is found in the secreted. The protein resides in the extracellular space. Its subcellular location is the extracellular matrix. Its function is as follows. Plays a role in cell adhesion. May play a role in cell-collagen interactions. The sequence is that of Transforming growth factor-beta-induced protein ig-h3 (Tgfbi) from Mus musculus (Mouse).